The following is a 333-amino-acid chain: Glycerol-3-phosphate dehydrogenase [NAD(P)+] (333 aa).

3 residues coordinate NADPH: Trp-12, His-31, and Lys-105. Positions 105, 134, and 136 each coordinate sn-glycerol 3-phosphate. Ala-138 lines the NADPH pocket. Sn-glycerol 3-phosphate is bound by residues Lys-189, Asp-242, Ser-252, Arg-253, and Asn-254. The active-site Proton acceptor is Lys-189. Arg-253 contributes to the NADPH binding site. Residues Val-278 and Glu-280 each contribute to the NADPH site.

It belongs to the NAD-dependent glycerol-3-phosphate dehydrogenase family.

The protein localises to the cytoplasm. It carries out the reaction sn-glycerol 3-phosphate + NAD(+) = dihydroxyacetone phosphate + NADH + H(+). The enzyme catalyses sn-glycerol 3-phosphate + NADP(+) = dihydroxyacetone phosphate + NADPH + H(+). Its pathway is membrane lipid metabolism; glycerophospholipid metabolism. Catalyzes the reduction of the glycolytic intermediate dihydroxyacetone phosphate (DHAP) to sn-glycerol 3-phosphate (G3P), the key precursor for phospholipid synthesis. In Brachyspira hyodysenteriae (strain ATCC 49526 / WA1), this protein is Glycerol-3-phosphate dehydrogenase [NAD(P)+].